We begin with the raw amino-acid sequence, 353 residues long: Nuclear hormone receptor family member nhr-27 (353 aa).

The nuclear receptor DNA-binding region spans 24 to 102; the sequence is VSNCVVCGRL…KGMLDLSRYT (79 aa). 2 NR C4-type zinc fingers span residues 27 to 47 and 64 to 85; these read CVVC…CSAC and CKYS…CKFC. An NR LBD domain is found at 119 to 351; sequence ETLFLTMTVS…SQVHQDVIEF (233 aa). The AF-2 stretch occupies residues 340–351; the sequence is QPSQVHQDVIEF.

This sequence belongs to the nuclear hormone receptor family.

The protein localises to the nucleus. Functionally, ligand-activated transcription factor. Involved in lifespan extension in a manner dependent upon mitochondrial function. This chain is Nuclear hormone receptor family member nhr-27, found in Caenorhabditis elegans.